Reading from the N-terminus, the 264-residue chain is Glutamate racemase (264 aa).

Substrate is bound by residues 10–11 (DS) and 42–43 (YG). C73 acts as the Proton donor/acceptor in catalysis. 74-75 (NT) is a binding site for substrate. The active-site Proton donor/acceptor is the C183. 184 to 185 (TH) lines the substrate pocket.

It belongs to the aspartate/glutamate racemases family.

It catalyses the reaction L-glutamate = D-glutamate. It functions in the pathway cell wall biogenesis; peptidoglycan biosynthesis. In terms of biological role, provides the (R)-glutamate required for cell wall biosynthesis. This chain is Glutamate racemase, found in Streptococcus uberis (strain ATCC BAA-854 / 0140J).